Reading from the N-terminus, the 126-residue chain is Small ribosomal subunit protein uS13 (126 aa).

A disordered region spans residues 95–126; it reads GMPVRGQRTRTNARTRRGRRGQAIGIKKKVKK.

Belongs to the universal ribosomal protein uS13 family. In terms of assembly, part of the 30S ribosomal subunit. Forms a loose heterodimer with protein S19. Forms two bridges to the 50S subunit in the 70S ribosome.

In terms of biological role, located at the top of the head of the 30S subunit, it contacts several helices of the 16S rRNA. In the 70S ribosome it contacts the 23S rRNA (bridge B1a) and protein L5 of the 50S subunit (bridge B1b), connecting the 2 subunits; these bridges are implicated in subunit movement. Contacts the tRNAs in the A and P-sites. This is Small ribosomal subunit protein uS13 from Chloroflexus aggregans (strain MD-66 / DSM 9485).